The following is a 264-amino-acid chain: tRNA pseudouridine synthase A (264 aa).

D54 acts as the Nucleophile in catalysis. Substrate is bound at residue Y113.

The protein belongs to the tRNA pseudouridine synthase TruA family. In terms of assembly, homodimer.

The catalysed reaction is uridine(38/39/40) in tRNA = pseudouridine(38/39/40) in tRNA. Its function is as follows. Formation of pseudouridine at positions 38, 39 and 40 in the anticodon stem and loop of transfer RNAs. This is tRNA pseudouridine synthase A from Leptospira biflexa serovar Patoc (strain Patoc 1 / Ames).